The sequence spans 188 residues: Protein TIFY 9 (188 aa).

The tract at residues 20–41 (DADDRHAKSGGSSASSSSSIRG) is disordered. Positions 28–38 (SGGSSASSSSS) are enriched in low complexity. Residues 80 to 114 (AAAAAAPMTLFYNGSVAVFDVSHDKAEAIMRMATE) form the Tify domain. Positions 135 to 160 (PLTRTKSLQRFLSKRKERLTSLGPYQ) match the Jas motif. Residues 156–188 (LGPYQVGGPAAVGATTSTTTKSFLAKEEEHTAS) form a disordered region. Residues 179–188 (LAKEEEHTAS) show a composition bias toward basic and acidic residues.

The protein belongs to the TIFY/JAZ family. In terms of processing, ubiquitinated. Targeted for degradation by the SCF(COI1) E3 ubiquitin ligase-proteasome pathway during jasmonate signaling.

In terms of biological role, repressor of jasmonate responses. The polypeptide is Protein TIFY 9 (Oryza sativa subsp. indica (Rice)).